Consider the following 2822-residue polypeptide: Piezo-type mechanosensitive ion channel component 2 (2822 aa).

Residues 1 to 12 (MASEVVCGLIFR) are Cytoplasmic-facing. The helical transmembrane segment at 13–24 (LLLPICLAVACA) threads the bilayer. At 25–30 (FRYNGL) the chain is on the extracellular side. The helical transmembrane segment at 31–43 (SFVYLIYLLLIPL) threads the bilayer. Over 44 to 50 (FSEPTKA) the chain is Cytoplasmic. Residues 51–76 (TMQGHTGRLLQSLCITSLSFLLLHII) form a helical membrane-spanning segment. Residues 77–122 (FHITLASLEAQHRITPAYNCSTWEKTFRQIGFESLKGADAGNGIRV) lie on the Extracellular side of the membrane. Asn-95 carries an N-linked (GlcNAc...) asparagine glycan. A helical membrane pass occupies residues 123 to 141 (FVPDIGMFIASLTIWLVCR). Residues 142–221 (TIVKKPDTEE…KEFIGNMITT (80 aa)) lie on the Cytoplasmic side of the membrane. The chain crosses the membrane as a helical span at residues 222–237 (AGKVVVTILLGSSGMM). Residues 238 to 240 (LPS) are Extracellular-facing. The helical transmembrane segment at 241 to 258 (LTSAVYFFVFLGLCTWWS) threads the bilayer. Over 259 to 264 (WCRTFD) the chain is Cytoplasmic. The helical transmembrane segment at 265 to 287 (PLLFGCLCVLLAIFTAGHLIGLY) threads the bilayer. At 288 to 335 (LYQFQFFQEAVPPNDYYARLFGIKSVIQTDCASTWKIIVNPDLSWYHH) the chain is on the extracellular side. Residues 336–355 (ANPILLLVMYYTLATLIRIW) traverse the membrane as a helical segment. The Cytoplasmic segment spans residues 356-492 (LQEPLVQEEM…SVRMHAMVAV (137 aa)). The disordered stretch occupies residues 450 to 481 (YRWEPSEESSEKKEEEEDKREDSEGEGSQEEK). Residues 455-482 (SEESSEKKEEEEDKREDSEGEGSQEEKR) are a coiled coil. Residues 463–477 (EEEEDKREDSEGEGS) are compositionally biased toward acidic residues. Residues 493–514 (FQFIMKQSYICALIAMMAWSIT) traverse the membrane as a helical segment. Over 515 to 519 (YHSWL) the chain is Extracellular. A helical transmembrane segment spans residues 520–531 (TFVLLIWSCTLW). The Cytoplasmic portion of the chain corresponds to 532 to 535 (MIRN). A helical membrane pass occupies residues 536–562 (RRKYAMISSPFMVVYANLLLVLQYIWS). Residues 563–583 (FELPEIKKVPGFLEKKEPGEL) lie on the Extracellular side of the membrane. A helical membrane pass occupies residues 584 to 614 (ASKILFTITFWLLLRQHLTEQKALREKEALL). Over 615-689 (SEVKIGSQEL…GNLVVALFIK (75 aa)) the chain is Cytoplasmic. 2 stretches are compositionally biased toward acidic residues: residues 624–633 (LEEKEDEELQ) and 643–652 (EKEEEEEEEI). Residues 624–668 (LEEKEDEELQDVQVEGEPTEKEEEEEEEIKEERHEVKKEEEEEVE) form a disordered region. Basic and acidic residues predominate over residues 653 to 662 (KEERHEVKKE). The helical transmembrane segment at 690 to 703 (YWIYVCGGMFFFVS) threads the bilayer. Topologically, residues 704–709 (FEGKIV) are extracellular. The chain crosses the membrane as a helical span at residues 710 to 728 (MYKIIYMVLFLFCVALYQV). The Cytoplasmic portion of the chain corresponds to 729–737 (HYEWWRKIL). The helical transmembrane segment at 738 to 757 (KYFWMSVVIYTMLVLIFIYT) threads the bilayer. Over 758-789 (YQFENFPGLWQNMTGLKKEKLEDLGLKQFTVA) the chain is Extracellular. The chain crosses the membrane as a helical span at residues 790–811 (ELFTRIFIPTSFLLVCILHLHY). The Cytoplasmic segment spans residues 812–957 (FHDRFLELTD…QVFMWWILEL (146 aa)). At Ser-856 the chain carries Phosphoserine. A compositionally biased stretch (basic and acidic residues) spans 875–901 (QKLAESGEERPEECVKKTEKGEAGKDS). The segment at 875 to 919 (QKLAESGEERPEECVKKTEKGEAGKDSDESEEEEDEEEESEEEES) is disordered. The segment covering 902-919 (DESEEEEDEEEESEEEES) has biased composition (acidic residues). A helical membrane pass occupies residues 958–973 (HIIKIVSSYIIWVTVK). Over 974 to 979 (EVSLFN) the chain is Extracellular. Residues 980–989 (YVFLISWAFA) form a helical membrane-spanning segment. Over 990-997 (LPYAKLRR) the chain is Cytoplasmic. A helical transmembrane segment spans residues 998 to 1018 (AASSVCTVWTCVIIVCKMLYQ). Topologically, residues 1019–1074 (LQTIKPENFSVNCSLPNENQTNIPLHELNKSLLYSAPVDPTEWVGLRKSSPLLVYL) are extracellular. Asn-1030 carries N-linked (GlcNAc...) asparagine glycosylation. Cysteines 1031 and 1209 form a disulfide. A helical membrane pass occupies residues 1075-1099 (RNNLLMLAILAFEVTVYRHQEYYRG). The Cytoplasmic portion of the chain corresponds to 1100–1140 (RNNLTAPVSKTIFHDITRLHLDDGLINCAKYFVNYFFYKFG). Residues 1141–1155 (LETCFLMSVNVIGQR) traverse the membrane as a helical segment. Topologically, residues 1156 to 1157 (MD) are extracellular. Residues 1158–1171 (FYAMIHACWLIGVL) form a helical membrane-spanning segment. At 1172-1182 (YRRRRKAIAEV) the chain is on the cytoplasmic side. Residues 1183–1202 (WPKYCCFLACIITFQYFVCI) traverse the membrane as a helical segment. Over 1203-1239 (GIPPAPCRDYPWRFKGAYFNDNIIKWLYFPDFIVRPN) the chain is Extracellular. A helical membrane pass occupies residues 1240 to 1260 (PVFLVYDFMLLLCASLQRQIF). Residues 1261 to 1314 (EDENKAAVRIMAGDNVEICMNLDAASFSQHNPVPDFIHCRSYLDMSKVIIFSYL) are Cytoplasmic-facing. The chain crosses the membrane as a helical span at residues 1315 to 1327 (FWFVLTIIFITGT). The Extracellular portion of the chain corresponds to 1328–1333 (TRISIF). The helical transmembrane segment at 1334–1346 (CMGYLVACFYFLL) threads the bilayer. At 1347–1355 (FGGDLLLKP) the chain is on the cytoplasmic side. Residues 1356 to 1381 (IKSILRYWDWLIAYNVFVITMKNILS) form a helical membrane-spanning segment. Residues 1382–1430 (IGACGYIGALVRNSCWLIQAFSLACTVKGYQMPEDDSRCKLPSGEAGII) lie on the Extracellular side of the membrane. Residues 1431–1447 (WDSICFAFLLLQRRVFM) form a helical membrane-spanning segment. The Cytoplasmic portion of the chain corresponds to 1448 to 1991 (SYYFLHVVAD…YAMYNTLVAR (544 aa)). Residues 1475–1515 (TIVKAVKARIEEEKKSMDQLKRQMDRIKARQQKYKKGKERM) are a coiled coil. Disordered stretches follow at residues 1505-1551 (QQKY…KKKQ) and 1611-1653 (LRQR…KKSD). Over residues 1611–1621 (LRQRRKEKKKL) the composition is skewed to basic residues. Residues 1622 to 1633 (AREEQKERRKGS) show a composition bias toward basic and acidic residues. Residues 1992–2006 (SEMVCYFVIILNHMT) form a helical membrane-spanning segment. Residues 2007 to 2013 (SASIITL) lie on the Extracellular side of the membrane. Residues 2014-2025 (LLPILIFLWAML) traverse the membrane as a helical segment. The Cytoplasmic segment spans residues 2026 to 2031 (SVPRPS). The helical transmembrane segment at 2032 to 2053 (RRFWMMAIVYTEVAIVVKYFFQ) threads the bilayer. Residues 2054–2086 (FGFFPWNKDLEIYKERPYFPPNIIGVEKKEGYV) lie on the Extracellular side of the membrane. The helical transmembrane segment at 2087–2105 (LYDLIQLLALFFHRSILKC) threads the bilayer. Over 2106 to 2259 (HGLWDEDDIV…HPDYSAVTDV (154 aa)) the chain is Cytoplasmic. 2 disordered regions span residues 2120–2139 (DKEG…GSSD) and 2164–2205 (IRRK…SVLS). Over residues 2170 to 2197 (CSSSQISPRSSFSSNRSKRGSTSTRNSS) the composition is skewed to low complexity. A helical transmembrane segment spans residues 2260-2279 (YVLMFLADTVDFIIIVFGFW). At 2280-2301 (AFGKHSAAADITSSLSEDQVPG) the chain is on the extracellular side. Residues 2302–2322 (PFLVMVLIQFGTMVVDRALYL) traverse the membrane as a helical segment. Residues 2323–2326 (RKTV) are Cytoplasmic-facing. A helical transmembrane segment spans residues 2327–2350 (LGKVIFQVILVFGIHFWMFFILPG). Over 2351 to 2359 (VTERKFSQN) the chain is Extracellular. A helical transmembrane segment spans residues 2360 to 2382 (LVAQLWYFVKCVYFGLSAYQIRC). The Cytoplasmic portion of the chain corresponds to 2383 to 2467 (GYPTRVLGNF…YPQPRGQKKK (85 aa)). The chain crosses the membrane as a helical span at residues 2468–2491 (KAVKYGMGGMIIVLLICIVWFPLL). Topologically, residues 2492–2739 (FMSLIKSVAG…PSLGFLAGYG (248 aa)) are extracellular. A glycan (N-linked (GlcNAc...) asparagine) is linked at Asn-2692. The helical transmembrane segment at 2740–2760 (IMGLYASVVLVIGKFVREFFS) threads the bilayer. The Cytoplasmic portion of the chain corresponds to 2761 to 2822 (GISHSIMFEE…MIKWTREKTN (62 aa)).

The protein belongs to the PIEZO (TC 1.A.75) family. In terms of assembly, homotrimer; the homotrimer forms a propeller-shaped Piezo channel with a cation-ion conducting pore. Heterotrimeric interaction may occur between PIEZO1 and PIEZO2. Interacts with STOM13. Interacts with TMC7; the interaction inhibits PIEZO2-conducted mechanically activated currents. Interacts with TMC1; the interaction may be part of the MET complex. Interacts with MDFIC (via C-terminus); the interaction prolongs Piezo channel inactivation. Interacts with MDFI (via C-terminus); the interaction prolongs Piezo channel inactivation. As to expression, expressed in bladder, colon, and lung, but less abundant in kidney or skin. Strong expression is observed in dorsal root ganglia (DRG) sensory neurons. Expressed in a wide range of cutaneous low-threshold mechanoreceptors (LTMRs), including Merkel cells and Meissner's corpuscles. Expressed in sensory neurons. Expressed in cochlear inner and outer hair cells and vestibular organ hair cells. Expressed in pulmonary neuroepithelial cell bodies. Expressed in bladder urothelium and sensory neurons of the lower urinary tract. Expressed in sensory endings of proprioceptors innervating muscle spindles and Golgi tendon organs.

It localises to the cell membrane. It carries out the reaction Ca(2+)(in) = Ca(2+)(out). Its activity is regulated as follows. Regulated by auxillary subunits MDFIC and MDFI. Channel activity is inhibited by TMEM120aa. Phosphatidic acid and lysophosphatidic acid inhibit Piezo2 channel activity. Functionally, pore-forming subunit of the mechanosensitive non-specific cation Piezo channel required for rapidly adapting mechanically activated (MA) currents and has a key role in sensing touch and tactile pain. Piezo channels are homotrimeric three-blade propeller-shaped structures that utilize a cap-motion and plug-and-latch mechanism to gate their ion-conducting pathways. Expressed in sensory neurons, is essential for diverse physiological processes, including respiratory control, systemic metabolism, urinary function, and proprioception. Mediates airway stretch sensing, enabling efficient respiration at birth and maintaining normal breathing in adults. It regulates brown and beige adipose tissue morphology and function, preventing systemic hypermetabolism. In the lower urinary tract, acts as a sensor in both the bladder urothelium and innervating sensory neurons and is required for bladder-stretch sensing and urethral micturition reflexes, ensuring proper urinary function. Additionally, Piezo2 serves as the principal mechanotransducer in proprioceptors, facilitating proprioception and coordinated body movements. In inner ear hair cells, PIEZO1/2 subunits may constitute part of the mechanotransducer (MET) non-selective cation channel complex where they may act as pore-forming ion-conducting component in the complex. Required for Merkel-cell mechanotransduction. Plays a major role in light-touch mechanosensation. This Mus musculus (Mouse) protein is Piezo-type mechanosensitive ion channel component 2.